The primary structure comprises 113 residues: Large ribosomal subunit protein uL24 (113 aa).

It belongs to the universal ribosomal protein uL24 family. As to quaternary structure, part of the 50S ribosomal subunit.

Functionally, one of two assembly initiator proteins, it binds directly to the 5'-end of the 23S rRNA, where it nucleates assembly of the 50S subunit. Its function is as follows. One of the proteins that surrounds the polypeptide exit tunnel on the outside of the subunit. In Rickettsia typhi (strain ATCC VR-144 / Wilmington), this protein is Large ribosomal subunit protein uL24.